Consider the following 335-residue polypeptide: MTLPPPAAYADSLRLSVAPMMDWTDRHCRVFHRLLAPSARLYTEMVHANAVIHGDRQRLIGFDAVEHPLALQLGGSDPALLAQAAQIAQAWGYDEINLNCGCPSDRVQAGRFGACLMREPALVADCVAAMCAATALPVTVKCRLGVDDDDDYAVFAGFIDQVVGAGAAMVVVHARNAWLKGLSPKENREVPPLRYDWAYRLKQERPALPVVLNGGIASVEASLAHLQHTDGVMLGRAAYHDPYVLHQLEAALSGRPERARADLLQAYQPYVQAQLDQGLALKHMTRHILGLFHGQPGGRVFRQVLSEGAHRPGAGWELVEQASQRTDDQARRIAA.

Residues 19-21 and Q72 contribute to the FMN site; that span reads PMM. Residue C102 is the Proton donor of the active site. FMN contacts are provided by residues K141, H173, 213–215, and 235–236; these read NGG and GR.

The protein belongs to the Dus family. DusA subfamily. Requires FMN as cofactor.

It catalyses the reaction 5,6-dihydrouridine(20) in tRNA + NADP(+) = uridine(20) in tRNA + NADPH + H(+). It carries out the reaction 5,6-dihydrouridine(20) in tRNA + NAD(+) = uridine(20) in tRNA + NADH + H(+). The enzyme catalyses 5,6-dihydrouridine(20a) in tRNA + NADP(+) = uridine(20a) in tRNA + NADPH + H(+). The catalysed reaction is 5,6-dihydrouridine(20a) in tRNA + NAD(+) = uridine(20a) in tRNA + NADH + H(+). Catalyzes the synthesis of 5,6-dihydrouridine (D), a modified base found in the D-loop of most tRNAs, via the reduction of the C5-C6 double bond in target uridines. Specifically modifies U20 and U20a in tRNAs. The sequence is that of tRNA-dihydrouridine(20/20a) synthase from Xanthomonas campestris pv. campestris (strain ATCC 33913 / DSM 3586 / NCPPB 528 / LMG 568 / P 25).